Here is a 150-residue protein sequence, read N- to C-terminus: Macrodomain Ter protein (150 aa).

The protein belongs to the MatP family. Homodimer.

The protein resides in the cytoplasm. Its function is as follows. Required for spatial organization of the terminus region of the chromosome (Ter macrodomain) during the cell cycle. Prevents early segregation of duplicated Ter macrodomains during cell division. Binds specifically to matS, which is a 13 bp signature motif repeated within the Ter macrodomain. The protein is Macrodomain Ter protein of Salmonella arizonae (strain ATCC BAA-731 / CDC346-86 / RSK2980).